We begin with the raw amino-acid sequence, 301 residues long: Alpha-ketoglutarate-dependent sulfate ester dioxygenase (301 aa).

Position 81 (His81) interacts with substrate. Residues His108 and Asp110 each contribute to the Fe cation site. Residue Val111 coordinates substrate. Thr135 provides a ligand contact to 2-oxoglutarate. His264 is a binding site for Fe cation. Positions 275 and 279 each coordinate 2-oxoglutarate.

Belongs to the TfdA dioxygenase family. In terms of assembly, homotetramer. Fe(2+) is required as a cofactor.

It carries out the reaction a primary linear alkyl sulfate ester + 2-oxoglutarate + O2 = an aldehyde + sulfate + succinate + CO2 + H(+). The catalysed reaction is 2-ethylhexyl sulfate + 2-oxoglutarate + O2 = 2-ethylhexanal + sulfate + succinate + CO2 + H(+). It catalyses the reaction decyl sulfate + 2-oxoglutarate + O2 = decanal + sulfate + succinate + CO2 + H(+). The enzyme catalyses hexyl sulfate + 2-oxoglutarate + O2 = hexanal + sulfate + succinate + CO2 + H(+). It carries out the reaction nonyl sufate + 2-oxoglutarate + O2 = nonanal + sulfate + succinate + CO2 + H(+). With respect to regulation, strongly stimulated by ascorbate. In terms of biological role, catalyzes the oxygenolytic cleavage of 2-ethylhexyl sulfate (2-EHS) in the presence of alpha-ketoglutarate to yield 2-ethyl-hexanal and succinate, the decarboxylated form of alpha-ketoglutarate. It can accept a wide range of alpha-keto acids including 2-oxo-valerate, 2-oxo-adipate, 2-oxo-octanoate, 3-methyl-2-oxo-butyrate, oxaloacetate-alpha-ketoadipate, and alpha-ketooctanoate. It can catalyze the cleavage of medium-chain alkyl sulfate esters such as butylsulfate, pentylsulfate, hexylsulfate, heptylsulfate, octylsulfate, nonylsulfate, decylsulfate and sodium dodecyl sulfate (SDS). The sequence is that of Alpha-ketoglutarate-dependent sulfate ester dioxygenase from Pseudomonas putida (Arthrobacter siderocapsulatus).